A 459-amino-acid chain; its full sequence is MGIEPSLPQSSPAPAKLTDPYLQIEGGYRLSGEVTISGAKNSSLALMAASLLTMEPCRLHNVPKLADIRMMSAILESLGVRVKPVAANTLDIDPRFLSVHRAPYELVNSLRASFFILGPILARLGMARIPLPGGCAIGARPVDLHVRGLQALGAQVRIEHGIVEARARKLRGGRIYLDYPSVGATETIMMAATLAEGETVIENAAQEPEVVDLANFCRSMGAHIRGAGSKTIVISGVPRLHGSEYHVIPDRIETGTFMAAAAITRSTLRIGPVFPEHLAAVLAKLREMGSVVNLVGPGTLEVSPGRVMAATDIETLPFPGFPTDMQAQFMSVLAVSEGTSIISETVFENRLMHVPELNRLGADIRVRSGHAIVRGVLKLSGAPVVATDLRASAALVIAGLAAHGTTTIAGLHHLDRGYESIERKLQALGARIERHLPSAPPSEVSSAVAAGPDAAAAPV.

40–41 (KN) provides a ligand contact to phosphoenolpyruvate. Arg-111 serves as a coordination point for UDP-N-acetyl-alpha-D-glucosamine. Cys-135 (proton donor) is an active-site residue. Residue Cys-135 is modified to 2-(S-cysteinyl)pyruvic acid O-phosphothioketal. Residues 140–144 (RPVDL), Asp-324, and Val-346 each bind UDP-N-acetyl-alpha-D-glucosamine. Residues 437 to 459 (PSAPPSEVSSAVAAGPDAAAAPV) form a disordered region. The span at 441–459 (PSEVSSAVAAGPDAAAAPV) shows a compositional bias: low complexity.

This sequence belongs to the EPSP synthase family. MurA subfamily.

The protein localises to the cytoplasm. The catalysed reaction is phosphoenolpyruvate + UDP-N-acetyl-alpha-D-glucosamine = UDP-N-acetyl-3-O-(1-carboxyvinyl)-alpha-D-glucosamine + phosphate. The protein operates within cell wall biogenesis; peptidoglycan biosynthesis. Cell wall formation. Adds enolpyruvyl to UDP-N-acetylglucosamine. The chain is UDP-N-acetylglucosamine 1-carboxyvinyltransferase from Gloeobacter violaceus (strain ATCC 29082 / PCC 7421).